The chain runs to 368 residues: MLGAIHLGVLAACFVLFVPMAMAGWHLSRNKMLFFSGALFISLAVCVHLTPYFPSVSDIVASVSSVVVYDHRISCINEVNQIVWDVKPVPNPESVRRNNGSTKLDYFVKNWDWMKSRKVLSCEFQKLDKFDVSDLLNGSWVVVAGDSQARFVALSLLNLVLGSDSKAMDSVRGDLFRRHSDYSIVVKEIGMKLDFVWAPYEKDLDDLVVSYKKMKKYPDVVIMGTGLWHMLHVNNASDFGFRLRQLSSHVESLVPLTPKEQEGGGSVSGRSVHLFWIGMPVLINGMLNTDEKKEKMSDTVWHEYDRSLGESKILRQMGGPLILLDIQSFTWNCGPQCTLDGMHYDSAVYDAAVHVMLNALLIESHQSL.

Residues 1 to 32 (MLGAIHLGVLAACFVLFVPMAMAGWHLSRNKM) are Cytoplasmic-facing. Residues 33–53 (LFFSGALFISLAVCVHLTPYF) traverse the membrane as a helical segment. Topologically, residues 54–368 (PSVSDIVASV…ALLIESHQSL (315 aa)) are lumenal. N-linked (GlcNAc...) asparagine glycosylation is found at Asn99, Asn137, and Asn235.

The protein resides in the golgi apparatus membrane. Component of the plant cell wall polysaccharide acetylation pathway. Does not directly catalyze O-acetylation of xyloglucan but exhibits weak acetylesterase activity in vitro. The protein is Protein ALTERED XYLOGLUCAN 9 of Arabidopsis thaliana (Mouse-ear cress).